We begin with the raw amino-acid sequence, 188 residues long: MQSAAETVENASILSGGSAQDGHRLWIGNIDPKITEYHLVKLLEKFGKVKQFDFLFHKSGPLEGQPRGYCFVNFHTKEEAERAIQCLNGKLALSKKLVVRWAHAQRFEPFRGEKNMPASLEPSSSEAEDLPTSLSVNAKIRAIEAKLQMMEENPDDYSGPSAYTYNKPPDKREKRSQPYHKHFRKHRR.

The region spanning 23-104 (HRLWIGNIDP…KKLVVRWAHA (82 aa)) is the RRM domain. The tract at residues 151-188 (EENPDDYSGPSAYTYNKPPDKREKRSQPYHKHFRKHRR) is disordered. Residues 177–188 (QPYHKHFRKHRR) show a composition bias toward basic residues.

In Danio rerio (Zebrafish), this protein is Probable RNA-binding protein 18 (rbm18).